A 233-amino-acid chain; its full sequence is 7-cyano-7-deazaguanine synthase (233 aa).

Residue 13 to 23 participates in ATP binding; the sequence is LSGGLDSATAM. Cys197, Cys207, Cys210, and Cys213 together coordinate Zn(2+).

The protein belongs to the QueC family. The cofactor is Zn(2+).

It carries out the reaction 7-carboxy-7-deazaguanine + NH4(+) + ATP = 7-cyano-7-deazaguanine + ADP + phosphate + H2O + H(+). The protein operates within purine metabolism; 7-cyano-7-deazaguanine biosynthesis. In terms of biological role, catalyzes the ATP-dependent conversion of 7-carboxy-7-deazaguanine (CDG) to 7-cyano-7-deazaguanine (preQ(0)). The chain is 7-cyano-7-deazaguanine synthase from Desulfatibacillum aliphaticivorans.